The chain runs to 239 residues: Ribosomal RNA small subunit methyltransferase G (239 aa).

S-adenosyl-L-methionine is bound by residues G77, F82, 128 to 129 (AE), and R147. Residues 216-239 (KKQSQTPKKFPRKPGTPNKSPIEG) form a disordered region.

It belongs to the methyltransferase superfamily. RNA methyltransferase RsmG family.

The protein localises to the cytoplasm. Its function is as follows. Specifically methylates the N7 position of guanine in position 535 of 16S rRNA. The chain is Ribosomal RNA small subunit methyltransferase G from Bacillus licheniformis (strain ATCC 14580 / DSM 13 / JCM 2505 / CCUG 7422 / NBRC 12200 / NCIMB 9375 / NCTC 10341 / NRRL NRS-1264 / Gibson 46).